The primary structure comprises 115 residues: Small polypeptide DEVIL 13 (115 aa).

The segment covering 1 to 12 has biased composition (basic and acidic residues); sequence MEEKWKLSKKDT. The tract at residues 1–89 is disordered; that stretch reads MEEKWKLSKK…SITQKYSSLA (89 aa). Residues 13–65 show a composition bias toward low complexity; the sequence is TASSSSSKSKFSRSFSTSASSTKSPIFVRSSSTKCSVPSSSSSSSSSSSISRS. The chain crosses the membrane as a helical span at residues 44 to 63; that stretch reads STKCSVPSSSSSSSSSSSIS. Positions 80–111 are required for DVL/RTFL small polypeptide activity; it reads SITQKYSSLAKEQKARFYIMRRCVAMLVCWHK.

The protein belongs to the DVL/RTFL small polypeptides family.

It is found in the cell membrane. Functionally, small polypeptide acting as a regulatory molecule which coordinates cellular responses required for differentiation, growth and development, probably by restricting polar cell proliferation in lateral organs and coordinating socket cell recruitment and differentiation at trichome sites. The chain is Small polypeptide DEVIL 13 from Arabidopsis thaliana (Mouse-ear cress).